A 653-amino-acid chain; its full sequence is Intermembrane lipid transfer protein vps13l (653 aa).

The B box-type zinc-finger motif lies at 5 to 49 (ISELKCQQHDKLVTIYCCACDAYFCKKCDKEKHSQDDNQEDSLHI). Cys-10, His-13, Cys-32, and His-37 together coordinate Zn(2+). Disordered stretches follow at residues 159–232 (NLID…NRKK), 248–420 (HILN…EDDS), and 627–653 (EKSNNNNNNNNLDSDSEGETYVNPNEN). Over residues 195–213 (SPSPSRSSESNSTTNNNNN) the composition is skewed to low complexity. Over residues 266–277 (DYDDDDDNDDDN) the composition is skewed to acidic residues. Positions 278–293 (NNNNNNNNNNNNNNNN) are enriched in low complexity. Positions 314 to 330 (ETEKEIENVENKIDNKP) are enriched in basic and acidic residues. Residues 366–381 (IFEEEEEEEEDEDEVG) show a composition bias toward acidic residues.

Belongs to the VPS13 family.

Its subcellular location is the membrane. Its function is as follows. Mediates the transfer of lipids between membranes at organelle contact sites. This Dictyostelium discoideum (Social amoeba) protein is Intermembrane lipid transfer protein vps13l (vps13l).